We begin with the raw amino-acid sequence, 416 residues long: S-adenosylmethionine synthase (416 aa).

His-16 contributes to the ATP binding site. Asp-18 contributes to the Mg(2+) binding site. Glu-44 lines the K(+) pocket. L-methionine is bound by residues Glu-57 and Gln-100. The flexible loop stretch occupies residues 100-110 (QSPDIAQGVTQ). ATP contacts are provided by residues 175–177 (DGK), 251–252 (KF), Asp-260, 266–267 (RK), Ala-283, and Lys-287. Asp-260 serves as a coordination point for L-methionine. Position 291 (Lys-291) interacts with L-methionine.

This sequence belongs to the AdoMet synthase family. Homotetramer; dimer of dimers. Mg(2+) is required as a cofactor. It depends on K(+) as a cofactor.

It is found in the cytoplasm. The enzyme catalyses L-methionine + ATP + H2O = S-adenosyl-L-methionine + phosphate + diphosphate. The protein operates within amino-acid biosynthesis; S-adenosyl-L-methionine biosynthesis; S-adenosyl-L-methionine from L-methionine: step 1/1. Catalyzes the formation of S-adenosylmethionine (AdoMet) from methionine and ATP. The overall synthetic reaction is composed of two sequential steps, AdoMet formation and the subsequent tripolyphosphate hydrolysis which occurs prior to release of AdoMet from the enzyme. The polypeptide is S-adenosylmethionine synthase (Crocosphaera subtropica (strain ATCC 51142 / BH68) (Cyanothece sp. (strain ATCC 51142))).